The chain runs to 319 residues: Lambda-crystallin homolog (319 aa).

A2 is modified (N-acetylalanine). At S3 the chain carries Phosphoserine. NAD(+) is bound by residues 16-17 (LI), D36, E97, and K102.

This sequence belongs to the 3-hydroxyacyl-CoA dehydrogenase family. In terms of assembly, homodimer.

Its subcellular location is the cytoplasm. It catalyses the reaction L-gulonate + NAD(+) = 3-dehydro-L-gulonate + NADH + H(+). Inhibited by malonate. In terms of biological role, has high L-gulonate 3-dehydrogenase activity. It also exhibits low dehydrogenase activity toward L-3-hydroxybutyrate (HBA) and L-threonate. This chain is Lambda-crystallin homolog (Cryl1), found in Rattus norvegicus (Rat).